A 433-amino-acid chain; its full sequence is Energy-coupling factor transporter ATP-binding protein EcfA2 (433 aa).

One can recognise an ABC transporter domain in the interval 25–389 (VRVKNLYAVY…QHIINSTSIQ (365 aa)). 62-69 (GNSGSGKS) provides a ligand contact to ATP.

It belongs to the ABC transporter superfamily. Energy-coupling factor EcfA family. Forms a stable energy-coupling factor (ECF) transporter complex composed of 2 membrane-embedded substrate-binding proteins (S component), 2 ATP-binding proteins (A component) and 2 transmembrane proteins (T component).

The protein localises to the cell membrane. Functionally, ATP-binding (A) component of a common energy-coupling factor (ECF) ABC-transporter complex. Unlike classic ABC transporters this ECF transporter provides the energy necessary to transport a number of different substrates. In Ureaplasma parvum serovar 3 (strain ATCC 700970), this protein is Energy-coupling factor transporter ATP-binding protein EcfA2.